We begin with the raw amino-acid sequence, 478 residues long: tRNA modification GTPase MnmE (478 aa).

Residues Arg-36, Glu-94, and Lys-133 each coordinate (6S)-5-formyl-5,6,7,8-tetrahydrofolate. Residues 230–402 (GIHVVLAGRP…LVETLCAKVG (173 aa)) form the TrmE-type G domain. Asn-240 is a K(+) binding site. Residues 240 to 245 (NAGKSS), 259 to 265 (TDVAGTT), and 284 to 287 (DTAG) contribute to the GTP site. Residue Ser-244 coordinates Mg(2+). Positions 259, 261, and 264 each coordinate K(+). A Mg(2+)-binding site is contributed by Thr-265. A (6S)-5-formyl-5,6,7,8-tetrahydrofolate-binding site is contributed by Lys-478.

Belongs to the TRAFAC class TrmE-Era-EngA-EngB-Septin-like GTPase superfamily. TrmE GTPase family. Homodimer. Heterotetramer of two MnmE and two MnmG subunits. Requires K(+) as cofactor.

It localises to the cytoplasm. Functionally, exhibits a very high intrinsic GTPase hydrolysis rate. Involved in the addition of a carboxymethylaminomethyl (cmnm) group at the wobble position (U34) of certain tRNAs, forming tRNA-cmnm(5)s(2)U34. The sequence is that of tRNA modification GTPase MnmE from Psychrobacter cryohalolentis (strain ATCC BAA-1226 / DSM 17306 / VKM B-2378 / K5).